Consider the following 329-residue polypeptide: Transaldolase (329 aa).

Lys-136 functions as the Schiff-base intermediate with substrate in the catalytic mechanism.

It belongs to the transaldolase family. Type 1 subfamily. As to quaternary structure, homodimer.

The protein localises to the cytoplasm. The enzyme catalyses D-sedoheptulose 7-phosphate + D-glyceraldehyde 3-phosphate = D-erythrose 4-phosphate + beta-D-fructose 6-phosphate. It functions in the pathway carbohydrate degradation; pentose phosphate pathway; D-glyceraldehyde 3-phosphate and beta-D-fructose 6-phosphate from D-ribose 5-phosphate and D-xylulose 5-phosphate (non-oxidative stage): step 2/3. Its function is as follows. Transaldolase is important for the balance of metabolites in the pentose-phosphate pathway. This Methylococcus capsulatus (strain ATCC 33009 / NCIMB 11132 / Bath) protein is Transaldolase.